The following is a 234-amino-acid chain: Zinc finger BED domain-containing protein 3 (234 aa).

Residues 19–42 (AAARGGQCPGLGPAPTPTPPGRLG) are disordered. The BED-type zinc-finger motif lies at 43-104 (APYSEAWGYF…SAHRRELESS (62 aa)). Zn(2+)-binding residues include C69, C72, H92, and H97. 2 disordered regions span residues 94-126 (RSAHRRELESSGAGSSPPAAPCPPPPGPAAAPE) and 202-225 (REGALGWAPAAPPPLKDDPEGDRD). The span at 111-122 (PAAPCPPPPGPA) shows a compositional bias: pro residues. Over residues 216–225 (LKDDPEGDRD) the composition is skewed to basic and acidic residues.

Associates with the subcortical maternal complex (SCMC) composed of at least NLRP5, KHDC3L, OOEP, and TLE6 via interaction with NLRP5 and TLE6. Interacts with AXIN1; the interaction is direct, enhanced by protein kinase GSK3B and casein kinase CSNK1E activities and decreases GSK3B-induced beta-catenin serine and threonine phosphorylations. Secreted in blood plasma, and expressed in skeletal muscle and adipose tissue (at protein level).

The protein resides in the cytoplasm. The protein localises to the membrane. Its subcellular location is the secreted. Functionally, acts as a positive regulator in the activation of the canonical Wnt/beta-catenin signaling pathway by stabilizing cytoplasmic beta-catenin. Involved in transcription activation of Wnt target gene expression. Plays a role in symmetric division of blastomeres in the early stages of embryogenesis via regulation of mitotic spindle central positioning and organization of the F-actin filament network. Plays a role in regulating the distribution of cellular organelles, via modulation of cytoskeletal dynamics and cytoplasmic lattice formation. The sequence is that of Zinc finger BED domain-containing protein 3 (ZBED3) from Homo sapiens (Human).